Here is a 389-residue protein sequence, read N- to C-terminus: 3-ketoacyl-CoA thiolase (389 aa).

Cys91 serves as the catalytic Acyl-thioester intermediate. Residues His343 and Cys373 each act as proton acceptor in the active site.

The protein belongs to the thiolase-like superfamily. Thiolase family. Heterotetramer of two alpha chains (FadB) and two beta chains (FadA).

The protein localises to the cytoplasm. The catalysed reaction is an acyl-CoA + acetyl-CoA = a 3-oxoacyl-CoA + CoA. It participates in lipid metabolism; fatty acid beta-oxidation. In terms of biological role, catalyzes the final step of fatty acid oxidation in which acetyl-CoA is released and the CoA ester of a fatty acid two carbons shorter is formed. This chain is 3-ketoacyl-CoA thiolase, found in Citrobacter koseri (strain ATCC BAA-895 / CDC 4225-83 / SGSC4696).